The chain runs to 333 residues: Holliday junction branch migration complex subunit RuvB (333 aa).

A large ATPase domain (RuvB-L) region spans residues 1 to 182; it reads MTNRILDMEQ…FGITGHMEYY (182 aa). Residues Leu-21, Arg-22, Gly-63, Lys-66, Thr-67, Thr-68, 129-131, Arg-172, Tyr-182, and Arg-219 each bind ATP; that span reads EDF. Thr-67 contacts Mg(2+). The small ATPAse domain (RuvB-S) stretch occupies residues 183–253; the sequence is ELADLTEIVE…ITDKALTMLD (71 aa). The head domain (RuvB-H) stretch occupies residues 256 to 333; that stretch reads REGLDYVDQK…EHLGYPYTEK (78 aa). DNA-binding residues include Arg-292, Arg-311, Arg-313, and Arg-316.

It belongs to the RuvB family. Homohexamer. Forms an RuvA(8)-RuvB(12)-Holliday junction (HJ) complex. HJ DNA is sandwiched between 2 RuvA tetramers; dsDNA enters through RuvA and exits via RuvB. An RuvB hexamer assembles on each DNA strand where it exits the tetramer. Each RuvB hexamer is contacted by two RuvA subunits (via domain III) on 2 adjacent RuvB subunits; this complex drives branch migration. In the full resolvosome a probable DNA-RuvA(4)-RuvB(12)-RuvC(2) complex forms which resolves the HJ.

It is found in the cytoplasm. It catalyses the reaction ATP + H2O = ADP + phosphate + H(+). The RuvA-RuvB-RuvC complex processes Holliday junction (HJ) DNA during genetic recombination and DNA repair, while the RuvA-RuvB complex plays an important role in the rescue of blocked DNA replication forks via replication fork reversal (RFR). RuvA specifically binds to HJ cruciform DNA, conferring on it an open structure. The RuvB hexamer acts as an ATP-dependent pump, pulling dsDNA into and through the RuvAB complex. RuvB forms 2 homohexamers on either side of HJ DNA bound by 1 or 2 RuvA tetramers; 4 subunits per hexamer contact DNA at a time. Coordinated motions by a converter formed by DNA-disengaged RuvB subunits stimulates ATP hydrolysis and nucleotide exchange. Immobilization of the converter enables RuvB to convert the ATP-contained energy into a lever motion, pulling 2 nucleotides of DNA out of the RuvA tetramer per ATP hydrolyzed, thus driving DNA branch migration. The RuvB motors rotate together with the DNA substrate, which together with the progressing nucleotide cycle form the mechanistic basis for DNA recombination by continuous HJ branch migration. Branch migration allows RuvC to scan DNA until it finds its consensus sequence, where it cleaves and resolves cruciform DNA. The protein is Holliday junction branch migration complex subunit RuvB of Streptococcus suis (strain 98HAH33).